A 283-amino-acid chain; its full sequence is Protein/nucleic acid deglycase HchA (283 aa).

Histidine 86, glutamate 91, and histidine 123 together coordinate Zn(2+). The Nucleophile role is filled by cysteine 185.

This sequence belongs to the peptidase C56 family. HchA subfamily. In terms of assembly, homodimer.

It localises to the cytoplasm. It carries out the reaction N(omega)-(1-hydroxy-2-oxopropyl)-L-arginyl-[protein] + H2O = lactate + L-arginyl-[protein] + H(+). The enzyme catalyses N(6)-(1-hydroxy-2-oxopropyl)-L-lysyl-[protein] + H2O = lactate + L-lysyl-[protein] + H(+). It catalyses the reaction S-(1-hydroxy-2-oxopropyl)-L-cysteinyl-[protein] + H2O = lactate + L-cysteinyl-[protein] + H(+). The catalysed reaction is N(omega)-(1-hydroxy-2-oxoethyl)-L-arginyl-[protein] + H2O = L-arginyl-[protein] + glycolate + H(+). It carries out the reaction N(6)-(1-hydroxy-2-oxoethyl)-L-lysyl-[protein] + H2O = glycolate + L-lysyl-[protein] + H(+). The enzyme catalyses S-(1-hydroxy-2-oxoethyl)-L-cysteinyl-[protein] + H2O = glycolate + L-cysteinyl-[protein] + H(+). It catalyses the reaction N(2)-(1-hydroxy-2-oxopropyl)-dGTP + H2O = lactate + dGTP + H(+). The catalysed reaction is N(2)-(1-hydroxy-2-oxopropyl)-GTP + H2O = lactate + GTP + H(+). It carries out the reaction N(2)-(1-hydroxy-2-oxopropyl)-GDP + H2O = lactate + GDP + H(+). The enzyme catalyses N(2)-(1-hydroxy-2-oxopropyl)-GMP + H2O = lactate + GMP + H(+). It catalyses the reaction N(2)-(1-hydroxy-2-oxoethyl)-dGTP + H2O = dGTP + glycolate + H(+). The catalysed reaction is N(2)-(1-hydroxy-2-oxoethyl)-GTP + H2O = glycolate + GTP + H(+). It carries out the reaction N(2)-(1-hydroxy-2-oxoethyl)-GDP + H2O = glycolate + GDP + H(+). The enzyme catalyses N(2)-(1-hydroxy-2-oxoethyl)-GMP + H2O = glycolate + GMP + H(+). It catalyses the reaction an N(2)-(1-hydroxy-2-oxopropyl)-guanosine in RNA + H2O = a guanosine in RNA + lactate + H(+). The catalysed reaction is an N(2)-(1-hydroxy-2-oxopropyl)-2'-deoxyguanosine in DNA + H2O = a 2'-deoxyguanosine in DNA + lactate + H(+). It carries out the reaction an N(2)-(1-hydroxy-2-oxoethyl)-guanosine in RNA + H2O = a guanosine in RNA + glycolate + H(+). The enzyme catalyses an N(2)-(1-hydroxy-2-oxoethyl)-2'-deoxyguanosine in DNA + H2O = a 2'-deoxyguanosine in DNA + glycolate + H(+). In terms of biological role, protein and nucleotide deglycase that catalyzes the deglycation of the Maillard adducts formed between amino groups of proteins or nucleotides and reactive carbonyl groups of glyoxals. Thus, functions as a protein deglycase that repairs methylglyoxal- and glyoxal-glycated proteins, and releases repaired proteins and lactate or glycolate, respectively. Deglycates cysteine, arginine and lysine residues in proteins, and thus reactivates these proteins by reversing glycation by glyoxals. Acts on early glycation intermediates (hemithioacetals and aminocarbinols), preventing the formation of Schiff bases and advanced glycation endproducts (AGE). Also functions as a nucleotide deglycase able to repair glycated guanine in the free nucleotide pool (GTP, GDP, GMP, dGTP) and in DNA and RNA. Is thus involved in a major nucleotide repair system named guanine glycation repair (GG repair), dedicated to reversing methylglyoxal and glyoxal damage via nucleotide sanitization and direct nucleic acid repair. Plays an important role in protecting cells from carbonyl stress. This chain is Protein/nucleic acid deglycase HchA, found in Escherichia coli (strain 55989 / EAEC).